Reading from the N-terminus, the 157-residue chain is Transcriptional repressor NrdR (157 aa).

Residues 1-24 (MRCPKCGGNKSSVVDSRQAEDGNT) form a disordered region. The segment at 3–34 (CPKCGGNKSSVVDSRQAEDGNTIRRRRECEEC) is a zinc-finger region. The ATP-cone domain maps to 49–139 (LVVVKKDGTR…VYRSFKDVGE (91 aa)).

Belongs to the NrdR family. Zn(2+) serves as cofactor.

Its function is as follows. Negatively regulates transcription of bacterial ribonucleotide reductase nrd genes and operons by binding to NrdR-boxes. This chain is Transcriptional repressor NrdR, found in Streptococcus sanguinis (strain SK36).